Here is a 386-residue protein sequence, read N- to C-terminus: Protein MGF 360-4L (386 aa).

This sequence belongs to the asfivirus MGF 360 family.

In terms of biological role, plays a role in virus cell tropism, and may be required for efficient virus replication in macrophages. This is Protein MGF 360-4L from Ornithodoros (relapsing fever ticks).